The chain runs to 231 residues: Cytochrome c oxidase subunit 2 (231 aa).

At 1 to 30 (MNNFFQGYNLLFQHSLFASYMDWFHAFNCS) the chain is on the mitochondrial intermembrane side. Residues 31-51 (LLLGVLVFVTLLFGYLIFSTF) traverse the membrane as a helical segment. Residues 52 to 64 (YFKSKKIEYQFGE) are Mitochondrial matrix-facing. Residues 65–85 (LLCSIFPTIILLMQMVPSLSL) traverse the membrane as a helical segment. The Mitochondrial intermembrane portion of the chain corresponds to 86–231 (LYYYGLMNLD…FKSWCFGTME (146 aa)). Residues histidine 164, cysteine 199, glutamate 201, cysteine 203, histidine 207, and methionine 210 each contribute to the Cu cation site. Position 201 (glutamate 201) interacts with Mg(2+).

This sequence belongs to the cytochrome c oxidase subunit 2 family. As to quaternary structure, component of the cytochrome c oxidase (complex IV, CIV), a multisubunit enzyme composed of a catalytic core of 3 subunits and several supernumerary subunits. The complex exists as a monomer or a dimer and forms supercomplexes (SCs) in the inner mitochondrial membrane with ubiquinol-cytochrome c oxidoreductase (cytochrome b-c1 complex, complex III, CIII). The cofactor is Cu cation.

The protein localises to the mitochondrion inner membrane. The enzyme catalyses 4 Fe(II)-[cytochrome c] + O2 + 8 H(+)(in) = 4 Fe(III)-[cytochrome c] + 2 H2O + 4 H(+)(out). Component of the cytochrome c oxidase, the last enzyme in the mitochondrial electron transport chain which drives oxidative phosphorylation. The respiratory chain contains 3 multisubunit complexes succinate dehydrogenase (complex II, CII), ubiquinol-cytochrome c oxidoreductase (cytochrome b-c1 complex, complex III, CIII) and cytochrome c oxidase (complex IV, CIV), that cooperate to transfer electrons derived from NADH and succinate to molecular oxygen, creating an electrochemical gradient over the inner membrane that drives transmembrane transport and the ATP synthase. Cytochrome c oxidase is the component of the respiratory chain that catalyzes the reduction of oxygen to water. Electrons originating from reduced cytochrome c in the intermembrane space (IMS) are transferred via the dinuclear copper A center (CU(A)) of subunit 2 and heme A of subunit 1 to the active site in subunit 1, a binuclear center (BNC) formed by heme A3 and copper B (CU(B)). The BNC reduces molecular oxygen to 2 water molecules using 4 electrons from cytochrome c in the IMS and 4 protons from the mitochondrial matrix. The sequence is that of Cytochrome c oxidase subunit 2 (cox-2) from Caenorhabditis briggsae.